The sequence spans 688 residues: DNA ligase (688 aa).

NAD(+) is bound by residues 42 to 46, 91 to 92, and Glu128; these read DAEYD and SL. The N6-AMP-lysine intermediate role is filled by Lys130. Residues Arg151, Glu188, Lys305, and Lys329 each contribute to the NAD(+) site. 4 residues coordinate Zn(2+): Cys423, Cys426, Cys441, and Cys447. The region spanning 608–688 is the BRCT domain; the sequence is APQGVLAGKT…GMRKLLEGQL (81 aa).

This sequence belongs to the NAD-dependent DNA ligase family. LigA subfamily. Mg(2+) serves as cofactor. Requires Mn(2+) as cofactor.

It catalyses the reaction NAD(+) + (deoxyribonucleotide)n-3'-hydroxyl + 5'-phospho-(deoxyribonucleotide)m = (deoxyribonucleotide)n+m + AMP + beta-nicotinamide D-nucleotide.. DNA ligase that catalyzes the formation of phosphodiester linkages between 5'-phosphoryl and 3'-hydroxyl groups in double-stranded DNA using NAD as a coenzyme and as the energy source for the reaction. It is essential for DNA replication and repair of damaged DNA. The sequence is that of DNA ligase from Paraburkholderia phytofirmans (strain DSM 17436 / LMG 22146 / PsJN) (Burkholderia phytofirmans).